Here is a 598-residue protein sequence, read N- to C-terminus: MVEQASTPYLFADMLARVHAICAALAKSGGWPEGIDFSRVVVEPPRDPSHGDMATNAAMVLAKEAKAKPRDLAEQIAERLRADELVAKVDVAGPGFINLTLQPSVWSKALATILREGAAYGRVAPVPGAPKVNVEYVSANPTGPMHVGHCRGAVFGDALSSLLQFAGRDVTREYYINDAGAQVDVLARSAYLRYREALGEDIGAIPEGLYPGDYLKPVGQALKTEHGDKLKAMPDAQWLPIVRDKAIAMMMDEIKDDLAALNIRHDVFFSERSLITGGNNKVAETIDFLRERGDVYEGRLPPPKGAPVEDWEDREQLLFRATAFGDDVDRPLIKSDGSYTYFASDIANHRHKFERGFADLIDVFGADHGGYIKRMQAAVKAVTAAQATLDVKVVQLVKLLRNGEPVKMSKRSGDFVTLREVVDEVGRDAVRFMMLYRKNDAVLDFDLAKVIEQSKDNPVFYVQYGHARGHSIFRNARESLPELPEEEGARIAFLREAKLERLADSAEHDLLKRLALYPRTVESAAMAHEPHRIAFYLYELASEFHALWTRGRDLPYLRFIIDDDAELTKARLAMVQGVVSVLASGLAILGVNAPDAMR.

The 'HIGH' region motif lies at 139 to 149; sequence ANPTGPMHVGH.

It belongs to the class-I aminoacyl-tRNA synthetase family. As to quaternary structure, monomer.

It localises to the cytoplasm. It catalyses the reaction tRNA(Arg) + L-arginine + ATP = L-arginyl-tRNA(Arg) + AMP + diphosphate. This Bradyrhizobium sp. (strain ORS 278) protein is Arginine--tRNA ligase.